We begin with the raw amino-acid sequence, 473 residues long: H(+)/Cl(-) exchange transporter ClcA (473 aa).

Residues 1–32 (MKTDTPSLETPQAARLRRRQLIRQLLERDKTP) are Cytoplasmic-facing. Residues 33 to 69 (LAILFMAAVVGTLVGLAAVAFDKGVAWLQNQRMGALV) traverse the membrane as a helical segment. At 70 to 76 (HTADNYP) the chain is on the periplasmic side. A helical membrane pass occupies residues 77-100 (LLLTVAFLCSAVLAMFGYFLVRKY). Positions 106 to 110 (GSGIP) match the Selectivity filter part_1 motif. A chloride-binding site is contributed by serine 107. Positions 109-116 (IPEIEGAL) form an intramembrane region, helical. The Cytoplasmic portion of the chain corresponds to 117 to 123 (EDQRPVR). 2 consecutive transmembrane segments (helical) span residues 124–141 (WWRV…TLGG) and 148–166 (EGPT…LDVF). Residues 146–150 (GREGP) carry the Selectivity filter part_2 motif. The Cytoplasmic segment spans residues 167-176 (RLKGDEARHT). Intramembrane regions (helical) lie at residues 177–189 (LLAT…LAAA) and 193–201 (PLAGILFII). At 202–214 (EEMRPQFRYTLIS) the chain is on the cytoplasmic side. The helical transmembrane segment at 215–232 (IKAVFIGVIMSTIMYRIF) threads the bilayer. Over 233-252 (NHEVALIDVGKLSDAPLNTL) the chain is Periplasmic. Residues 253–281 (WLYLILGIIFGIFGPIFNKWVLGMQDLLH) form a helical membrane-spanning segment. Over 282–287 (RVHGGN) the chain is Cytoplasmic. Residues 288–309 (ITKWVLMGGAIGGLCGLLGFVA) traverse the membrane as a helical segment. Residues 310 to 329 (PATSGGGFNLIPIATAGNFS) lie on the Periplasmic side of the membrane. The next 2 membrane-spanning stretches (helical) occupy residues 330–349 (MGML…LCFS) and 355–376 (GIFA…MVAV). Residues 355–359 (GIFAP) carry the Selectivity filter part_3 motif. Chloride-binding residues include isoleucine 356 and phenylalanine 357. The Periplasmic portion of the chain corresponds to 377 to 386 (ELFPQYHLEA). An intramembrane region (helical) is located at residues 387–401 (GTFAIAGMGALLAAS). The note=Loop between two helices intramembrane region spans 402-404 (IRA). Residues 405–416 (PLTGIILVLEMT) constitute an intramembrane region (helical). An intramembrane region (note=Loop between two helices) is located at residues 417–421 (DNYQL). The chain crosses the membrane as a helical span at residues 422–438 (ILPMIITGLGATLLAQF). Residues 439–473 (TGGKPLYSAILARTLAKQEAEQLARSKAASASENT) are Cytoplasmic-facing. Tyrosine 445 is a binding site for chloride.

This sequence belongs to the chloride channel (TC 2.A.49) family. ClcA subfamily. Homodimer.

It localises to the cell inner membrane. It carries out the reaction 2 chloride(in) + H(+)(out) = 2 chloride(out) + H(+)(in). In terms of biological role, proton-coupled chloride transporter. Functions as antiport system and exchanges two chloride ions for 1 proton. Probably acts as an electrical shunt for an outwardly-directed proton pump that is linked to amino acid decarboxylation, as part of the extreme acid resistance (XAR) response. The protein is H(+)/Cl(-) exchange transporter ClcA of Escherichia coli O157:H7.